A 155-amino-acid chain; its full sequence is Small ribosomal subunit protein uS7 (155 aa).

This sequence belongs to the universal ribosomal protein uS7 family. In terms of assembly, part of the 30S ribosomal subunit. Contacts proteins S9 and S11.

In terms of biological role, one of the primary rRNA binding proteins, it binds directly to 16S rRNA where it nucleates assembly of the head domain of the 30S subunit. Is located at the subunit interface close to the decoding center, probably blocks exit of the E-site tRNA. The protein is Small ribosomal subunit protein uS7 of Chlorobium limicola (strain DSM 245 / NBRC 103803 / 6330).